A 228-amino-acid polypeptide reads, in one-letter code: ATP-dependent dethiobiotin synthetase BioD 1 (228 aa).

13 to 18 (EVGKTV) contributes to the ATP binding site. Threonine 17 provides a ligand contact to Mg(2+). Lysine 38 is a catalytic residue. Serine 42 is a binding site for substrate. ATP contacts are provided by residues aspartate 55, 116-119 (EGAG), 176-177 (ND), and 205-207 (PWL). 2 residues coordinate Mg(2+): aspartate 55 and glutamate 116.

The protein belongs to the dethiobiotin synthetase family. As to quaternary structure, homodimer. Mg(2+) serves as cofactor.

The protein resides in the cytoplasm. It carries out the reaction (7R,8S)-7,8-diammoniononanoate + CO2 + ATP = (4R,5S)-dethiobiotin + ADP + phosphate + 3 H(+). It functions in the pathway cofactor biosynthesis; biotin biosynthesis; biotin from 7,8-diaminononanoate: step 1/2. Catalyzes a mechanistically unusual reaction, the ATP-dependent insertion of CO2 between the N7 and N8 nitrogen atoms of 7,8-diaminopelargonic acid (DAPA, also called 7,8-diammoniononanoate) to form a ureido ring. The sequence is that of ATP-dependent dethiobiotin synthetase BioD 1 from Salmonella typhi.